A 317-amino-acid polypeptide reads, in one-letter code: Beta-ketoacyl-[acyl-carrier-protein] synthase III (317 aa).

Residues Cys-112 and His-244 contribute to the active site. Residues 245–249 (QANLR) are ACP-binding. Residue Asn-274 is part of the active site.

The protein belongs to the thiolase-like superfamily. FabH family. Homodimer.

It is found in the cytoplasm. The enzyme catalyses malonyl-[ACP] + acetyl-CoA + H(+) = 3-oxobutanoyl-[ACP] + CO2 + CoA. It participates in lipid metabolism; fatty acid biosynthesis. Its function is as follows. Catalyzes the condensation reaction of fatty acid synthesis by the addition to an acyl acceptor of two carbons from malonyl-ACP. Catalyzes the first condensation reaction which initiates fatty acid synthesis and may therefore play a role in governing the total rate of fatty acid production. Possesses both acetoacetyl-ACP synthase and acetyl transacylase activities. Its substrate specificity determines the biosynthesis of branched-chain and/or straight-chain of fatty acids. This Baumannia cicadellinicola subsp. Homalodisca coagulata protein is Beta-ketoacyl-[acyl-carrier-protein] synthase III.